The following is a 169-amino-acid chain: S-ribosylhomocysteine lyase (169 aa).

Fe cation is bound by residues H54, H58, and C128.

The protein belongs to the LuxS family. Homodimer. Requires Fe cation as cofactor.

The enzyme catalyses S-(5-deoxy-D-ribos-5-yl)-L-homocysteine = (S)-4,5-dihydroxypentane-2,3-dione + L-homocysteine. Its function is as follows. Involved in the synthesis of autoinducer 2 (AI-2) which is secreted by bacteria and is used to communicate both the cell density and the metabolic potential of the environment. The regulation of gene expression in response to changes in cell density is called quorum sensing. Catalyzes the transformation of S-ribosylhomocysteine (RHC) to homocysteine (HC) and 4,5-dihydroxy-2,3-pentadione (DPD). The protein is S-ribosylhomocysteine lyase of Shewanella oneidensis (strain ATCC 700550 / JCM 31522 / CIP 106686 / LMG 19005 / NCIMB 14063 / MR-1).